The sequence spans 500 residues: Endothelial lipase (500 aa).

The signal sequence occupies residues 1–20 (MRNTVFLLGFWSVYCYFPAG). Cys64 and Cys77 are joined by a disulfide. Residues Asn65, Asn80, and Asn136 are each glycosylated (N-linked (GlcNAc...) asparagine). The active-site Nucleophile is the Ser169. The active-site Charge relay system is the Asp193. A disulfide bridge links Cys252 with Cys272. The Charge relay system role is filled by His274. Disulfide bonds link Cys297-Cys316 and Cys308-Cys311. 325–337 (KMRKKRNSKMYLK) serves as a coordination point for heparin. The region spanning 347–482 (YHYQLKVHMF…SPGQELWFHK (136 aa)) is the PLAT domain. N-linked (GlcNAc...) asparagine glycosylation is found at Asn359 and Asn393. Cys463 and Cys483 are oxidised to a cystine. Asn491 is a glycosylation site (N-linked (GlcNAc...) asparagine).

This sequence belongs to the AB hydrolase superfamily. Lipase family. In terms of assembly, head to tail homodimer. As to expression, expressed in placenta, lung, liver, testis and spleen.

It localises to the secreted. The enzyme catalyses a triacylglycerol + H2O = a diacylglycerol + a fatty acid + H(+). The catalysed reaction is a 1,2-diacyl-sn-glycero-3-phosphocholine + H2O = a 2-acyl-sn-glycero-3-phosphocholine + a fatty acid + H(+). It carries out the reaction 1,2,3-tri-(9Z-octadecenoyl)-glycerol + H2O = di-(9Z)-octadecenoylglycerol + (9Z)-octadecenoate + H(+). It catalyses the reaction 1,2,3-tributanoylglycerol + H2O = dibutanoylglycerol + butanoate + H(+). The enzyme catalyses 1,2-dihexadecanoyl-sn-glycero-3-phosphocholine + H2O = hexadecanoyl-sn-glycero-3-phosphocholine + hexadecanoate + H(+). Exerts both phospholipase and triglyceride lipase activities. More active as a phospholipase than a triglyceride lipase. Hydrolyzes triglycerides, both with short-chain fatty acyl groups (tributyrin) and long-chain fatty acyl groups (triolein) with similar levels of activity toward both types of substrates. Hydrolyzes high density lipoproteins (HDL) more efficiently than other lipoproteins. The polypeptide is Endothelial lipase (Lipg) (Mus musculus (Mouse)).